Consider the following 322-residue polypeptide: Mitochondrial thiamine pyrophosphate carrier 1 (322 aa).

Solcar repeat units lie at residues 12–111, 122–208, and 215–310; these read GSKT…VTLG, PAAA…LRLP, and PFGS…VLGI. Helical transmembrane passes span 18–38, 92–108, 128–148, 180–200, 221–241, and 285–302; these read MIAG…LDVV, LMYV…YRSV, FIAG…LDLL, FFQG…IFFA, ASAG…FDLI, and GLTV…VTMW.

This sequence belongs to the mitochondrial carrier (TC 2.A.29) family.

It is found in the mitochondrion inner membrane. Functionally, mitochondrial transporter that mediates uptake of thiamine pyrophosphate (ThPP) into mitochondria. The chain is Mitochondrial thiamine pyrophosphate carrier 1 (tpc1) from Botryotinia fuckeliana (strain B05.10) (Noble rot fungus).